A 358-amino-acid polypeptide reads, in one-letter code: Cilia- and flagella-associated protein 263 (358 aa).

3 coiled-coil regions span residues 93–138, 176–200, and 266–343; these read YKKM…FKRN, RKNS…EMAE, and RTKL…YTKS.

It belongs to the CFAP263 family. Forms a complex with CFAP184; the interaction is required for functional activity in cilia. Interacts with HAP1 and PCM1.

It is found in the cytoplasm. The protein resides in the cytoskeleton. Its subcellular location is the microtubule organizing center. The protein localises to the centrosome. It localises to the centriolar satellite. It is found in the cell projection. The protein resides in the cilium. In terms of biological role, component of centriolar satellites contributing to primary cilium formation. In complex with CFAP263, acts as a regulator of ciliary beating that connects radial spoke 3 (RS3) to the inner dynein arm (IDA) and the nexin-dynein regulatory complex (N-DRC). The complex is positioned parallel to N-DRC and forms a connection between the arch at the base of RS3, the IDA tail and N-DRC. This chain is Cilia- and flagella-associated protein 263 (cfap263), found in Danio rerio (Zebrafish).